The chain runs to 110 residues: Endoribonuclease SymE (110 aa).

Positions 29–74 (SRYPDYTRIPALTMKGQWLEAAGFATGTEVDVRVMNGCIVLTAQQP) constitute a SpoVT-AbrB domain.

Belongs to the SymE family.

It is found in the cytoplasm. Its function is as follows. Involved in the degradation and recycling of damaged RNA. It is itself a target for degradation by the ATP-dependent protease Lon. The sequence is that of Endoribonuclease SymE from Salmonella typhi.